The chain runs to 449 residues: Chromosomal replication initiator protein DnaA (449 aa).

Residues Met-1–Met-75 form a domain I, interacts with DnaA modulators region. The segment at Met-75–Ser-106 is domain II. Residues Ser-107–Ala-321 form a domain III, AAA+ region region. Residues Gly-151, Gly-153, Lys-154, and Thr-155 each contribute to the ATP site. A domain IV, binds dsDNA region spans residues Asn-322–His-449.

The protein belongs to the DnaA family. In terms of assembly, oligomerizes as a right-handed, spiral filament on DNA at oriC.

Its subcellular location is the cytoplasm. Plays an essential role in the initiation and regulation of chromosomal replication. ATP-DnaA binds to the origin of replication (oriC) to initiate formation of the DNA replication initiation complex once per cell cycle. Binds the DnaA box (a 9 base pair repeat at the origin) and separates the double-stranded (ds)DNA. Forms a right-handed helical filament on oriC DNA; dsDNA binds to the exterior of the filament while single-stranded (ss)DNA is stabiized in the filament's interior. The ATP-DnaA-oriC complex binds and stabilizes one strand of the AT-rich DNA unwinding element (DUE), permitting loading of DNA polymerase. After initiation quickly degrades to an ADP-DnaA complex that is not apt for DNA replication. Binds acidic phospholipids. The chain is Chromosomal replication initiator protein DnaA from Helicobacter acinonychis (strain Sheeba).